The following is a 398-amino-acid chain: CCA-adding enzyme (398 aa).

The ATP site is built by Gly-32 and Arg-35. Positions 32 and 35 each coordinate CTP. Mg(2+) is bound by residues Asp-45 and Asp-47. Residues Arg-119, Asp-162, Arg-165, Arg-168, and Arg-171 each coordinate ATP. Arg-119, Asp-162, Arg-165, Arg-168, and Arg-171 together coordinate CTP.

This sequence belongs to the tRNA nucleotidyltransferase/poly(A) polymerase family. Bacterial CCA-adding enzyme type 3 subfamily. In terms of assembly, homodimer. Mg(2+) is required as a cofactor.

It carries out the reaction a tRNA precursor + 2 CTP + ATP = a tRNA with a 3' CCA end + 3 diphosphate. The enzyme catalyses a tRNA with a 3' CCA end + 2 CTP + ATP = a tRNA with a 3' CCACCA end + 3 diphosphate. In terms of biological role, catalyzes the addition and repair of the essential 3'-terminal CCA sequence in tRNAs without using a nucleic acid template. Adds these three nucleotides in the order of C, C, and A to the tRNA nucleotide-73, using CTP and ATP as substrates and producing inorganic pyrophosphate. tRNA 3'-terminal CCA addition is required both for tRNA processing and repair. Also involved in tRNA surveillance by mediating tandem CCA addition to generate a CCACCA at the 3' terminus of unstable tRNAs. While stable tRNAs receive only 3'-terminal CCA, unstable tRNAs are marked with CCACCA and rapidly degraded. In Lactococcus lactis subsp. lactis (strain IL1403) (Streptococcus lactis), this protein is CCA-adding enzyme.